A 409-amino-acid chain; its full sequence is Elongation factor Tu, chloroplastic (409 aa).

One can recognise a tr-type G domain in the interval 10–214 (KPHVNIGTIG…KIDEYIPTPE (205 aa)). The interval 19-26 (GHVDHGKT) is G1. Residue 19 to 26 (GHVDHGKT) participates in GTP binding. Thr26 is a Mg(2+) binding site. The tract at residues 60–64 (GITIN) is G2. A G3 region spans residues 81 to 84 (DCPG). Residues 81–85 (DCPGH) and 136–139 (NKAD) contribute to the GTP site. The G4 stretch occupies residues 136 to 139 (NKAD). The G5 stretch occupies residues 174–176 (SAL).

The protein belongs to the TRAFAC class translation factor GTPase superfamily. Classic translation factor GTPase family. EF-Tu/EF-1A subfamily.

The protein resides in the plastid. Its subcellular location is the chloroplast. It carries out the reaction GTP + H2O = GDP + phosphate + H(+). Functionally, GTP hydrolase that promotes the GTP-dependent binding of aminoacyl-tRNA to the A-site of ribosomes during protein biosynthesis. The sequence is that of Elongation factor Tu, chloroplastic (tufA) from Rhodomonas salina (Cryptomonas salina).